Reading from the N-terminus, the 126-residue chain is S-adenosylmethionine decarboxylase proenzyme (126 aa).

The active-site Schiff-base intermediate with substrate; via pyruvic acid is serine 63. Pyruvic acid (Ser); by autocatalysis is present on serine 63. Residue histidine 68 is the Proton acceptor; for processing activity of the active site. Cysteine 83 serves as the catalytic Proton donor; for catalytic activity.

It belongs to the prokaryotic AdoMetDC family. Type 1 subfamily. Heterotetramer of two alpha and two beta chains arranged as a dimer of alpha/beta heterodimers. The cofactor is pyruvate. Is synthesized initially as an inactive proenzyme. Formation of the active enzyme involves a self-maturation process in which the active site pyruvoyl group is generated from an internal serine residue via an autocatalytic post-translational modification. Two non-identical subunits are generated from the proenzyme in this reaction, and the pyruvate is formed at the N-terminus of the alpha chain, which is derived from the carboxyl end of the proenzyme. The post-translation cleavage follows an unusual pathway, termed non-hydrolytic serinolysis, in which the side chain hydroxyl group of the serine supplies its oxygen atom to form the C-terminus of the beta chain, while the remainder of the serine residue undergoes an oxidative deamination to produce ammonia and the pyruvoyl group blocking the N-terminus of the alpha chain.

The enzyme catalyses S-adenosyl-L-methionine + H(+) = S-adenosyl 3-(methylsulfanyl)propylamine + CO2. The protein operates within amine and polyamine biosynthesis; S-adenosylmethioninamine biosynthesis; S-adenosylmethioninamine from S-adenosyl-L-methionine: step 1/1. In terms of biological role, catalyzes the decarboxylation of S-adenosylmethionine to S-adenosylmethioninamine (dcAdoMet), the propylamine donor required for the synthesis of the polyamines spermine and spermidine from the diamine putrescine. This chain is S-adenosylmethionine decarboxylase proenzyme, found in Pelotomaculum thermopropionicum (strain DSM 13744 / JCM 10971 / SI).